A 320-amino-acid polypeptide reads, in one-letter code: Transcription termination/antitermination protein NusG (320 aa).

It belongs to the NusG family.

Participates in transcription elongation, termination and antitermination. This chain is Transcription termination/antitermination protein NusG, found in Mycoplasma pneumoniae (strain ATCC 29342 / M129 / Subtype 1) (Mycoplasmoides pneumoniae).